The chain runs to 346 residues: Phosphoribosylformylglycinamidine cyclo-ligase (346 aa).

This sequence belongs to the AIR synthase family.

It localises to the cytoplasm. The catalysed reaction is 2-formamido-N(1)-(5-O-phospho-beta-D-ribosyl)acetamidine + ATP = 5-amino-1-(5-phospho-beta-D-ribosyl)imidazole + ADP + phosphate + H(+). Its pathway is purine metabolism; IMP biosynthesis via de novo pathway; 5-amino-1-(5-phospho-D-ribosyl)imidazole from N(2)-formyl-N(1)-(5-phospho-D-ribosyl)glycinamide: step 2/2. The protein is Phosphoribosylformylglycinamidine cyclo-ligase of Bacillus velezensis (strain DSM 23117 / BGSC 10A6 / LMG 26770 / FZB42) (Bacillus amyloliquefaciens subsp. plantarum).